The chain runs to 563 residues: UvrABC system protein C (563 aa).

The region spanning 12–87 is the GIY-YIG domain; that stretch reads NKSGVYIFKK…IYKYKPKYNA (76 aa). In terms of domain architecture, UVR spans 194 to 229; it reads SNVISFIKLKMEQHARLLDFENAAKYRDILLNFNKV.

Belongs to the UvrC family. As to quaternary structure, interacts with UvrB in an incision complex.

It is found in the cytoplasm. The UvrABC repair system catalyzes the recognition and processing of DNA lesions. UvrC both incises the 5' and 3' sides of the lesion. The N-terminal half is responsible for the 3' incision and the C-terminal half is responsible for the 5' incision. The polypeptide is UvrABC system protein C (Fervidobacterium nodosum (strain ATCC 35602 / DSM 5306 / Rt17-B1)).